A 409-amino-acid chain; its full sequence is Lissencephaly-1 homolog (409 aa).

A LisH domain is found at 7-39 (QREELNQAIADYLGTNGYADSLEAFRKEADLST). Positions 54 to 81 (TSVIRLQKKVMELEAKLTEAEKEVIEGA) form a coiled coil. 7 WD repeats span residues 104–145 (GHRA…RSLK), 146–185 (GHTDSVQDVAFDAQGKLLVSCSADLSIKLWDFQQSYACVK), 189–228 (GHDHNVSSVAFVPAGDYVLSASRDRTIKMWEVATGYCVKT), 231–270 (GHREWVRMVRVHIEGSLFATCSNDHTIRVWLTNSKDCKVE), 273–332 (DHEH…CLLT), 335–374 (GHDNWVRGLAFHPGGKYLVSASDDKTIRVWDLRNKRCMKT), and 377–409 (AHQHFCTSIDFHKAHPYVISGSVDQTVKVWECR).

The protein belongs to the WD repeat LIS1/nudF family.

It localises to the cytoplasm. It is found in the cytoskeleton. The protein localises to the microtubule organizing center. The protein resides in the centrosome. Functionally, positively regulates the activity of the minus-end directed microtubule motor protein dynein. May enhance dynein-mediated microtubule sliding by targeting dynein to the microtubule plus end. Required for several dynein- and microtubule-dependent processes. The protein is Lissencephaly-1 homolog of Drosophila willistoni (Fruit fly).